The chain runs to 354 residues: MLYLPKKLFLFFFSCIVVIVNYNNSDFVNAANSIGFVNAANSIGLNYGLLGDNLPSPSKVITLYKSIDITKIRIFDPNTEVLNALRGHRDIAVTVGVRDQDLAALSASEEAVKGWFATNIEPYLSDINIAFITVGNEVIPGPIGPQVLPVMQSLTNLVKSRNLPISISTVVAMWNLEQSYPPSAGMFTSQAREQLVPVLKLLSQTNSPILVKIYPYFSYASDPSSIRLDYATFNTEAIVVQDGSLGYSNMFDAIFDAFVWAMEKEGVKDLPMVVSETGWPSAGNGNITTPDIAGTYNRNFVKHIASGKGTPKRPNKGIDGFLFATFNENQKPVGTEQNFGLYNPNDMKPIYNLF.

The signal sequence occupies residues 1 to 30 (MLYLPKKLFLFFFSCIVVIVNYNNSDFVNA). The active-site Proton donor is Glu-137. The active-site Nucleophile is Glu-276. Residue Asn-286 is glycosylated (N-linked (GlcNAc...) asparagine).

Belongs to the glycosyl hydrolase 17 family.

It localises to the secreted. The enzyme catalyses Hydrolysis of (1-&gt;3)-beta-D-glucosidic linkages in (1-&gt;3)-beta-D-glucans.. Its function is as follows. May play a role in plant defense against pathogens. This Arabidopsis thaliana (Mouse-ear cress) protein is Probable glucan endo-1,3-beta-glucosidase BG5.